The sequence spans 334 residues: Holliday junction branch migration complex subunit RuvB (334 aa).

Residues 4–184 (ADRLIQPQLQ…FGIPLRLEFY (181 aa)) are large ATPase domain (RuvB-L). ATP-binding positions include R24, G65, K68, T69, T70, 131–133 (EDY), R174, Y184, and R221. T69 is a binding site for Mg(2+). Residues 185–255 (NVKDLSTIVT…VAELALNLLD (71 aa)) are small ATPAse domain (RuvB-S). The tract at residues 258–334 (GEGFDYMDRK…YVHFGMIKPE (77 aa)) is head domain (RuvB-H). 3 residues coordinate DNA: R294, R313, and R318.

This sequence belongs to the RuvB family. As to quaternary structure, homohexamer. Forms an RuvA(8)-RuvB(12)-Holliday junction (HJ) complex. HJ DNA is sandwiched between 2 RuvA tetramers; dsDNA enters through RuvA and exits via RuvB. An RuvB hexamer assembles on each DNA strand where it exits the tetramer. Each RuvB hexamer is contacted by two RuvA subunits (via domain III) on 2 adjacent RuvB subunits; this complex drives branch migration. In the full resolvosome a probable DNA-RuvA(4)-RuvB(12)-RuvC(2) complex forms which resolves the HJ.

It localises to the cytoplasm. It catalyses the reaction ATP + H2O = ADP + phosphate + H(+). In terms of biological role, the RuvA-RuvB-RuvC complex processes Holliday junction (HJ) DNA during genetic recombination and DNA repair, while the RuvA-RuvB complex plays an important role in the rescue of blocked DNA replication forks via replication fork reversal (RFR). RuvA specifically binds to HJ cruciform DNA, conferring on it an open structure. The RuvB hexamer acts as an ATP-dependent pump, pulling dsDNA into and through the RuvAB complex. RuvB forms 2 homohexamers on either side of HJ DNA bound by 1 or 2 RuvA tetramers; 4 subunits per hexamer contact DNA at a time. Coordinated motions by a converter formed by DNA-disengaged RuvB subunits stimulates ATP hydrolysis and nucleotide exchange. Immobilization of the converter enables RuvB to convert the ATP-contained energy into a lever motion, pulling 2 nucleotides of DNA out of the RuvA tetramer per ATP hydrolyzed, thus driving DNA branch migration. The RuvB motors rotate together with the DNA substrate, which together with the progressing nucleotide cycle form the mechanistic basis for DNA recombination by continuous HJ branch migration. Branch migration allows RuvC to scan DNA until it finds its consensus sequence, where it cleaves and resolves cruciform DNA. In Shewanella oneidensis (strain ATCC 700550 / JCM 31522 / CIP 106686 / LMG 19005 / NCIMB 14063 / MR-1), this protein is Holliday junction branch migration complex subunit RuvB.